Here is a 1568-residue protein sequence, read N- to C-terminus: Pentafunctional AROM polypeptide (1568 aa).

The segment at 1-380 (MSQVEKVSIL…YQLKAHEVSK (380 aa)) is 3-dehydroquinate synthase. Residues 43–45 (DSN), 81–84 (ENNK), 112–114 (GGV), and aspartate 117 each bind NAD(+). Arginine 128 is a 7-phospho-2-dehydro-3-deoxy-D-arabino-heptonate binding site. 137–138 (TT) contributes to the NAD(+) binding site. Positions 144 and 150 each coordinate 7-phospho-2-dehydro-3-deoxy-D-arabino-heptonate. Residue lysine 159 coordinates NAD(+). Asparagine 160 contacts 7-phospho-2-dehydro-3-deoxy-D-arabino-heptonate. Residues 177–180 (FLTT) and asparagine 188 contribute to the NAD(+) site. Glutamate 192 is a Zn(2+) binding site. Residues 192–195 (EVVK) and lysine 244 contribute to the 7-phospho-2-dehydro-3-deoxy-D-arabino-heptonate site. The active-site Proton acceptor; for 3-dehydroquinate synthase activity is glutamate 254. 7-phospho-2-dehydro-3-deoxy-D-arabino-heptonate contacts are provided by residues 258–262 (RNLLN) and histidine 265. Histidine 265 contributes to the Zn(2+) binding site. Catalysis depends on histidine 269, which acts as the Proton acceptor; for 3-dehydroquinate synthase activity. 2 residues coordinate 7-phospho-2-dehydro-3-deoxy-D-arabino-heptonate: histidine 281 and lysine 352. Histidine 281 provides a ligand contact to Zn(2+). The segment at 393–842 (VHPFQEETTP…WDVLHTKFGV (450 aa)) is EPSP synthase. Catalysis depends on cysteine 824, which acts as the For EPSP synthase activity. The shikimate kinase stretch occupies residues 867–1056 (DKSIVVIGMR…VPKGRSFVLS (190 aa)). An ATP-binding site is contributed by 874–881 (GMRAAGKS). Residues 1057–1267 (LACSDLNDIA…SGNGQLTVGE (211 aa)) are 3-dehydroquinase. The tract at residues 1280–1568 (RRNFYIVGNP…VYEAVVDDNV (289 aa)) is shikimate dehydrogenase.

It in the N-terminal section; belongs to the sugar phosphate cyclases superfamily. Dehydroquinate synthase family. This sequence in the 2nd section; belongs to the EPSP synthase family. The protein in the 3rd section; belongs to the shikimate kinase family. In the 4th section; belongs to the type-I 3-dehydroquinase family. It in the C-terminal section; belongs to the shikimate dehydrogenase family. As to quaternary structure, homodimer. The cofactor is Zn(2+).

It localises to the cytoplasm. It carries out the reaction 7-phospho-2-dehydro-3-deoxy-D-arabino-heptonate = 3-dehydroquinate + phosphate. The catalysed reaction is 3-dehydroquinate = 3-dehydroshikimate + H2O. The enzyme catalyses shikimate + NADP(+) = 3-dehydroshikimate + NADPH + H(+). It catalyses the reaction shikimate + ATP = 3-phosphoshikimate + ADP + H(+). It carries out the reaction 3-phosphoshikimate + phosphoenolpyruvate = 5-O-(1-carboxyvinyl)-3-phosphoshikimate + phosphate. It functions in the pathway metabolic intermediate biosynthesis; chorismate biosynthesis; chorismate from D-erythrose 4-phosphate and phosphoenolpyruvate: step 2/7. The protein operates within metabolic intermediate biosynthesis; chorismate biosynthesis; chorismate from D-erythrose 4-phosphate and phosphoenolpyruvate: step 3/7. Its pathway is metabolic intermediate biosynthesis; chorismate biosynthesis; chorismate from D-erythrose 4-phosphate and phosphoenolpyruvate: step 4/7. It participates in metabolic intermediate biosynthesis; chorismate biosynthesis; chorismate from D-erythrose 4-phosphate and phosphoenolpyruvate: step 5/7. It functions in the pathway metabolic intermediate biosynthesis; chorismate biosynthesis; chorismate from D-erythrose 4-phosphate and phosphoenolpyruvate: step 6/7. Its function is as follows. The AROM polypeptide catalyzes 5 consecutive enzymatic reactions in prechorismate polyaromatic amino acid biosynthesis. The chain is Pentafunctional AROM polypeptide from Clavispora lusitaniae (strain ATCC 42720) (Yeast).